The following is a 430-amino-acid chain: MTNIVVVGLQWGDEGKGKVVDWLSNNADAVVRFQGGNNAGHTIVIQEKTYKLNLLPSSILHNNKLSIIGNGVVLDPYALMSEIDNLRINGININTQNLVISESCPLVLNIHKEADTLFEQLRQNTIGTTNKGIGPCYADKISRRALRVCDLFDKKDILYNKVNNLLNYHNLLRQNFNILPIEASKLVDELLDIAPKILPFVKPVWKVIHDLTQQNKTIIFEGAQGTFLDIDHGTYPFVTSSNTIAPQAFVGGGINLSHSSCVLGVIKAYTTRVGNGPFFTEQKNEIGKSMFERGNEIGTVSNRERRCGWFDAVLAKQAIILSGVSGLVLTKLDVLDQFSEIKICTQYKYDGVIYDYIPASSYVQNNLEPIYETVPGWKENTFGSVTYEDLPKNAISYIKKIEEILKVPVYLISTGPERNAMIIINDKFLK.

GTP contacts are provided by residues 12–18 (GDEGKGK) and 40–42 (GHT). The active-site Proton acceptor is the aspartate 13. Mg(2+) contacts are provided by aspartate 13 and glycine 40. IMP is bound by residues 13–16 (DEGK), 38–41 (NAGH), threonine 129, arginine 143, glutamine 224, threonine 239, and arginine 303. Catalysis depends on histidine 41, which acts as the Proton donor. 299–305 (TVSNRER) provides a ligand contact to substrate. GTP-binding positions include arginine 305, 331–333 (KLD), and 413–415 (STG).

Belongs to the adenylosuccinate synthetase family. As to quaternary structure, homodimer. The cofactor is Mg(2+).

It localises to the cytoplasm. It carries out the reaction IMP + L-aspartate + GTP = N(6)-(1,2-dicarboxyethyl)-AMP + GDP + phosphate + 2 H(+). Its pathway is purine metabolism; AMP biosynthesis via de novo pathway; AMP from IMP: step 1/2. Functionally, plays an important role in the de novo pathway of purine nucleotide biosynthesis. Catalyzes the first committed step in the biosynthesis of AMP from IMP. This chain is Adenylosuccinate synthetase, found in Ehrlichia ruminantium (strain Welgevonden).